Reading from the N-terminus, the 259-residue chain is uncharacterized protein (259 aa).

Positions 1–22 (MKHSKKLLLCISFLLITFFISG) are cleaved as a signal peptide. Cys23 carries N-palmitoyl cysteine lipidation. The S-diacylglycerol cysteine moiety is linked to residue Cys23.

Belongs to the staphylococcal tandem lipoprotein family.

It localises to the cell membrane. This is an uncharacterized protein from Staphylococcus epidermidis (strain ATCC 35984 / DSM 28319 / BCRC 17069 / CCUG 31568 / BM 3577 / RP62A).